The sequence spans 112 residues: Putative transposase YkgN (112 aa).

Belongs to the transposase 8 family.

The protein is Putative transposase YkgN (ykgN) of Escherichia coli (strain K12).